The sequence spans 274 residues: Basic leucine zipper transcriptional factor ATF-like 2 (274 aa).

Disordered regions lie at residues 1-47, 128-151, and 187-229; these read MHLC…ALHQ, GSCY…LLQC, and GSSS…PSSA. Residues 17–80 form the bZIP domain; that stretch reads EQQRQLKKQK…AWWSRTLHVH (64 aa). Residues 20–41 are basic motif; sequence RQLKKQKNRAAAQRSRQKHTDK. A compositionally biased stretch (basic and acidic residues) spans 37–47; that stretch reads KHTDKADALHQ. Residues 45-66 are leucine-zipper; that stretch reads LHQQHESLEKDNLALRKEIQSL. Over residues 187–196 the composition is skewed to low complexity; the sequence is GSSSKLSALQ.

The protein belongs to the bZIP family. In terms of assembly, heterodimer; heterodimerizes with JUN family proteins.

The protein localises to the nucleus. AP-1 family transcription factor that controls the differentiation of lineage-specific cells in the immune system. Following infection, participates in the differentiation of CD8(+) thymic conventional dendritic cells in the immune system. Acts via the formation of a heterodimer with JUN family proteins that recognizes and binds DNA sequence 5'-TGA[CG]TCA-3' and regulates expression of target genes. Selectively suppresses CCN1 transcription and hence blocks the downstream cell proliferation signals produced by CCN1 and inhibits CCN1-induced anchorage-independent growth and invasion in several cancer types, such as breast cancer, malignant glioma and metastatic melanoma. Possibly acts by interfering with AP-1 binding to CCN1 promoter. In Homo sapiens (Human), this protein is Basic leucine zipper transcriptional factor ATF-like 2 (BATF2).